Here is a 374-residue protein sequence, read N- to C-terminus: Peptide chain release factor 2 (374 aa).

An N5-methylglutamine modification is found at Q248.

Belongs to the prokaryotic/mitochondrial release factor family. In terms of processing, methylated by PrmC. Methylation increases the termination efficiency of RF2.

It is found in the cytoplasm. Peptide chain release factor 2 directs the termination of translation in response to the peptide chain termination codons UGA and UAA. This is Peptide chain release factor 2 from Thermomicrobium roseum (strain ATCC 27502 / DSM 5159 / P-2).